The primary structure comprises 60 residues: Small ribosomal subunit protein eS17 (60 aa).

Belongs to the eukaryotic ribosomal protein eS17 family.

The chain is Small ribosomal subunit protein eS17 from Methanosphaera stadtmanae (strain ATCC 43021 / DSM 3091 / JCM 11832 / MCB-3).